The chain runs to 519 residues: T-box transcription factor TBX5 (519 aa).

Residues 1–46 form a disordered region; the sequence is MADTEEAYGMPDTPVEAEPKELQCEPKQDNQLGASSKTPTSPPAAF. The segment covering 17–28 has biased composition (basic and acidic residues); the sequence is AEPKELQCEPKQ. Positions 29-39 are enriched in polar residues; sequence DNQLGASSKTP. Residues 63 to 238 constitute a DNA-binding region (T-box); that stretch reads LWLKFHEVGT…NNPFAKGFRG (176 aa). 3 disordered regions span residues 254 to 282, 293 to 312, and 326 to 372; these read EYPV…RNIT, CENG…SAYT, and KRKV…TSFR. Residues 262–282 are compositionally biased toward polar residues; it reads TVRQKVSSNHSPFSQETRNIT. Over residues 298–309 the composition is skewed to low complexity; it reads SSTSQDLLPSSS. Over residues 328-342 the composition is skewed to basic and acidic residues; sequence KVSEEPAEHSYKKPY.

As to quaternary structure, monomer. Homodimer (via the T-box); binds DNA as homodimer.

The protein resides in the nucleus. The protein localises to the cytoplasm. In terms of biological role, DNA-binding protein that regulates the transcription of several genes and is involved in heart development and limb pattern formation. May bind to the core DNA motif of promoters. This Xenopus laevis (African clawed frog) protein is T-box transcription factor TBX5 (tbx5).